The sequence spans 119 residues: Large ribosomal subunit protein uL14 (119 aa).

It belongs to the universal ribosomal protein uL14 family. In terms of assembly, part of the 50S ribosomal subunit. Forms a cluster with proteins L3 and L19. In the 70S ribosome, L14 and L19 interact and together make contacts with the 16S rRNA in bridges B5 and B8.

Binds to 23S rRNA. Forms part of two intersubunit bridges in the 70S ribosome. In Ehrlichia ruminantium (strain Gardel), this protein is Large ribosomal subunit protein uL14.